We begin with the raw amino-acid sequence, 44 residues long: Photosystem II reaction center protein K (44 aa).

Residues 1–7 constitute a propeptide that is removed on maturation; it reads MESLLLA. A helical transmembrane segment spans residues 23–43; that stretch reads FPVIPVFFLLLAFVWQAAVGF.

This sequence belongs to the PsbK family. As to quaternary structure, PSII is composed of 1 copy each of membrane proteins PsbA, PsbB, PsbC, PsbD, PsbE, PsbF, PsbH, PsbI, PsbJ, PsbK, PsbL, PsbM, PsbT, PsbX, PsbY, PsbZ, Psb30/Ycf12, at least 3 peripheral proteins of the oxygen-evolving complex and a large number of cofactors. It forms dimeric complexes.

It is found in the plastid. Its subcellular location is the chloroplast thylakoid membrane. One of the components of the core complex of photosystem II (PSII). PSII is a light-driven water:plastoquinone oxidoreductase that uses light energy to abstract electrons from H(2)O, generating O(2) and a proton gradient subsequently used for ATP formation. It consists of a core antenna complex that captures photons, and an electron transfer chain that converts photonic excitation into a charge separation. This Thalassiosira pseudonana (Marine diatom) protein is Photosystem II reaction center protein K.